We begin with the raw amino-acid sequence, 1184 residues long: Protein stu1 (1184 aa).

2 HEAT repeats span residues 92 to 130 and 162 to 194; these read FCPVLLERLGDHKERVRAQAAQIFTDLWPAASADVEHYV and RSYVPSVVSCLEDADSFVRHTAKSTVVELFQGA. Composition is skewed to basic and acidic residues over residues 229 to 240 and 308 to 317; these read SSTARPRSRVEP and EAEKAPHMET. A disordered region spans residues 229–336; that stretch reads SSTARPRSRV…APQPLHAETS (108 aa). The HEAT 3 repeat unit spans residues 463–499; it reads VTYTPRLLQHVTSACQDKNAQLRLFAAGWLKTLLNKQ. 2 disordered regions span residues 564 to 584 and 602 to 906; these read LEKDPANPNRDQSSYLSSDTL and ARLA…RVEE. A compositionally biased stretch (polar residues) spans 572-584; sequence NRDQSSYLSSDTL. The segment covering 640–649 has biased composition (low complexity); sequence APLSSLSSAP. Polar residues predominate over residues 723-737; it reads SASNENETQVATQVA. Basic and acidic residues-rich tracts occupy residues 787-811 and 882-895; these read AGRHDDHAPCEISFDKLDRHDENKL and EQDRRVEKTIDSAE.

The protein belongs to the CLASP family. Interacts with microtubules.

The protein localises to the cytoplasm. It localises to the cytoskeleton. Its subcellular location is the nucleus. It is found in the spindle. Its function is as follows. Microtubule binding protein that promotes the stabilization of dynamic microtubules. Required for mitotic spindle formation. This is Protein stu1 (stu1) from Aspergillus oryzae (strain ATCC 42149 / RIB 40) (Yellow koji mold).